The primary structure comprises 355 residues: Cyclic nucleotide-gated potassium channel RHE_CH03180 (355 aa).

The Cytoplasmic portion of the chain corresponds to 1–12 (MSAVPFSKISTP). The helical transmembrane segment at 13-30 (LNALFATIGLLVVAALTT) threads the bilayer. Residues 31–38 (QGLTGQER) lie on the Periplasmic side of the membrane. Residues 39-61 (LVFELLLAAIWLAYVLQLSGTLL) form a helical membrane-spanning segment. The Cytoplasmic portion of the chain corresponds to 62–73 (SRRRRLSGEMTA). The helical transmembrane segment at 74–93 (LVIDLLAVLVPAAAFLFVGS) threads the bilayer. A helical membrane pass occupies residues 94–111 (RDRDLYCAIWLLKPLRDS). The Cytoplasmic segment spans residues 112–128 (TFFRLLAKVVANESRNL). A helical membrane pass occupies residues 129–149 (LGVTSVFGIVLFGAALAGYII). Topologically, residues 150–160 (ERDVQPDKFGS) are periplasmic. The pore-forming intramembrane region spans 161–179 (IPQAMWWAVVTLSTTGYGD). Positions 174–179 (TTGYGD) match the Selectivity filter motif. Residues 180–184 (EIPQS) are Periplasmic-facing. A helical membrane pass occupies residues 185-209 (LAGRVLAGLVMMSGIGIFALWAGIL). Residues 210 to 355 (ATGFYEEVRR…LERRGGPPKE (146 aa)) lie on the Cytoplasmic side of the membrane. 3',5'-cyclic AMP contacts are provided by residues 297–298 (GE), 307–308 (RS), and Arg348.

This sequence belongs to the potassium channel family. Homotetramer.

Its subcellular location is the cell membrane. Its function is as follows. Cyclic nucleotide-regulated potassium channel activated by cAMP. The chain is Cyclic nucleotide-gated potassium channel RHE_CH03180 from Rhizobium etli (strain ATCC 51251 / DSM 11541 / JCM 21823 / NBRC 15573 / CFN 42).